A 372-amino-acid chain; its full sequence is ATP phosphoribosyltransferase regulatory subunit (372 aa).

This sequence belongs to the class-II aminoacyl-tRNA synthetase family. HisZ subfamily. As to quaternary structure, heteromultimer composed of HisG and HisZ subunits.

It localises to the cytoplasm. It participates in amino-acid biosynthesis; L-histidine biosynthesis; L-histidine from 5-phospho-alpha-D-ribose 1-diphosphate: step 1/9. Functionally, required for the first step of histidine biosynthesis. May allow the feedback regulation of ATP phosphoribosyltransferase activity by histidine. This is ATP phosphoribosyltransferase regulatory subunit from Rhizobium rhizogenes (strain K84 / ATCC BAA-868) (Agrobacterium radiobacter).